We begin with the raw amino-acid sequence, 230 residues long: CRP-like protein Clp (230 aa).

18 to 139 (PSLALDAGTI…APKILYAIGV (122 aa)) lines the a nucleoside 3',5'-cyclic phosphate pocket. One can recognise an HTH crp-type domain in the interval 158-230 (LDVTDRIVRT…GKTVVLYGTR (73 aa)). Residues 190-209 (RQELARLVGCSREMAGRVLK) constitute a DNA-binding region (H-T-H motif).

As to quaternary structure, homodimer.

It localises to the cytoplasm. Its activity is regulated as follows. Allosterically inhibited by cyclic di-GMP (c-di-GMP), which binds to Clp and abolishes its ability to bind its target gene promoter. Functionally, global transcriptional regulator that regulates virulence factors production by activating or repressing the expression of a large set of genes in diffusible signal factor (DSF) pathway. The polypeptide is CRP-like protein Clp (clp) (Xanthomonas axonopodis pv. citri (strain 306)).